Reading from the N-terminus, the 366-residue chain is UDP-N-acetylglucosamine--N-acetylmuramyl-(pentapeptide) pyrophosphoryl-undecaprenol N-acetylglucosamine transferase (366 aa).

UDP-N-acetyl-alpha-D-glucosamine is bound by residues 14-16 (TGG), Asn-125, Arg-168, Ser-196, and Gln-297.

Belongs to the glycosyltransferase 28 family. MurG subfamily.

It localises to the cell inner membrane. The enzyme catalyses di-trans,octa-cis-undecaprenyl diphospho-N-acetyl-alpha-D-muramoyl-L-alanyl-D-glutamyl-meso-2,6-diaminopimeloyl-D-alanyl-D-alanine + UDP-N-acetyl-alpha-D-glucosamine = di-trans,octa-cis-undecaprenyl diphospho-[N-acetyl-alpha-D-glucosaminyl-(1-&gt;4)]-N-acetyl-alpha-D-muramoyl-L-alanyl-D-glutamyl-meso-2,6-diaminopimeloyl-D-alanyl-D-alanine + UDP + H(+). Its pathway is cell wall biogenesis; peptidoglycan biosynthesis. Functionally, cell wall formation. Catalyzes the transfer of a GlcNAc subunit on undecaprenyl-pyrophosphoryl-MurNAc-pentapeptide (lipid intermediate I) to form undecaprenyl-pyrophosphoryl-MurNAc-(pentapeptide)GlcNAc (lipid intermediate II). The polypeptide is UDP-N-acetylglucosamine--N-acetylmuramyl-(pentapeptide) pyrophosphoryl-undecaprenol N-acetylglucosamine transferase (Rhodopseudomonas palustris (strain ATCC BAA-98 / CGA009)).